A 363-amino-acid chain; its full sequence is Ankyrin repeat domain-containing protein 40 (363 aa).

M1 bears the N-acetylmethionine mark. 2 ANK repeats span residues E9–S38 and N43–I72. Residues D135–L167 are disordered. Residues P144–E164 are compositionally biased toward pro residues. Position 176 is a phosphoserine (S176).

The polypeptide is Ankyrin repeat domain-containing protein 40 (Ankrd40) (Mus musculus (Mouse)).